Consider the following 187-residue polypeptide: UPF0232 protein MMAR_0004 (187 aa).

Disordered stretches follow at residues 1-77 (MSDD…QPLG) and 166-187 (ASPSWRKGPRHIAGRGPRDTYG). Residues 14-30 (AARDELSGMDLVRRTLA) are compositionally biased toward basic and acidic residues. The segment covering 31 to 55 (EARAAARARGQDPGRGFAAGPAPRR) has biased composition (low complexity).

Belongs to the UPF0232 family.

In Mycobacterium marinum (strain ATCC BAA-535 / M), this protein is UPF0232 protein MMAR_0004.